Consider the following 680-residue polypeptide: Tumor protein 63 (680 aa).

The tract at residues 1–107 is transcription activation; the sequence is MNFETSRCAT…MQDSDLSDPM (107 aa). Polar residues predominate over residues 122–157; that stretch reads QQIQNGSSSTSPYNTDHAQNSVTAPSPYAQPSSTFD. Residues 122–171 form a disordered region; sequence QQIQNGSSSTSPYNTDHAQNSVTAPSPYAQPSSTFDALSPSPAIPSNTDY. Residues 170–362 mediate DNA binding; the sequence is DYPGPHSFDV…KADEDSIRKQ (193 aa). Positions 244, 247, 308, and 312 each coordinate Zn(2+). A compositionally biased stretch (basic and acidic residues) spans 351–360; the sequence is DRKADEDSIR. Disordered regions lie at residues 351–393 and 436–472; these read DRKA…IKKR and RQQQ…MNSM. The interaction with HIPK2 stretch occupies residues 352-388; that stretch reads RKADEDSIRKQQVSDSAKNGDGTKRPFRQNTHGIQMT. Polar residues predominate over residues 379–389; it reads RQNTHGIQMTS. Residues 394 to 443 are oligomerization; sequence RSPDDELLYLPVRGRETYEMLLKIKESLELMQYLPQHTIETYRQQQQQQH. The span at 437–463 shows a compositional bias: low complexity; it reads QQQQQQHQHLLQKQTSMQSQSSYGNSS. An SAM domain is found at 541–607; it reads PPYPTDCSIV…WKGILDHRQL (67 aa). The interval 610-680 is transactivation inhibition; the sequence is FSSPPHLLRT…KQQRIKEEGE (71 aa). A Glycyl lysine isopeptide (Lys-Gly) (interchain with G-Cter in SUMO) cross-link involves residue Lys-676.

Belongs to the p53 family. Binds DNA as a homotetramer. Isoform composition of the tetramer may determine transactivation activity. Interacts with HIPK2. Interacts with SSRP1, leading to stimulate coactivator activity. Interacts with WWP1. Interacts with PDS5A. Interacts (via activation domain) with NOC2L. It depends on Zn(2+) as a cofactor. In terms of processing, may be sumoylated. Ubiquitinated. Polyubiquitination involves WWP1 and leads to proteasomal degradation of this protein. Widely expressed, notably in thymus, prostate, placenta, and skeletal muscle, although the precise isoform varies according to tissue type. Progenitor cell layers of skin, breast and prostate express high levels of DeltaN-type isoforms.

The protein localises to the nucleus. Acts as a sequence specific DNA binding transcriptional activator or repressor. The isoforms contain a varying set of transactivation and auto-regulating transactivation inhibiting domains thus showing an isoform specific activity. May be required in conjunction with TP73/p73 for initiation of p53/TP53 dependent apoptosis in response to genotoxic insults and the presence of activated oncogenes. Involved in Notch signaling by probably inducing JAG1 and JAG2. Activates RIPK4 transcription. Plays a role in the regulation of epithelial morphogenesis. The ratio of DeltaN-type and TA*-type isoforms may govern the maintenance of epithelial stem cell compartments and regulate the initiation of epithelial stratification from the undifferentiated embryonal ectoderm. Required for limb formation from the apical ectodermal ridge. Activates transcription of the p21 promoter. In Rattus norvegicus (Rat), this protein is Tumor protein 63 (Tp63).